The chain runs to 228 residues: 2-C-methyl-D-erythritol 4-phosphate cytidylyltransferase (228 aa).

The protein belongs to the IspD/TarI cytidylyltransferase family. IspD subfamily.

The catalysed reaction is 2-C-methyl-D-erythritol 4-phosphate + CTP + H(+) = 4-CDP-2-C-methyl-D-erythritol + diphosphate. It participates in isoprenoid biosynthesis; isopentenyl diphosphate biosynthesis via DXP pathway; isopentenyl diphosphate from 1-deoxy-D-xylulose 5-phosphate: step 2/6. In terms of biological role, catalyzes the formation of 4-diphosphocytidyl-2-C-methyl-D-erythritol from CTP and 2-C-methyl-D-erythritol 4-phosphate (MEP). The polypeptide is 2-C-methyl-D-erythritol 4-phosphate cytidylyltransferase (Geobacillus kaustophilus (strain HTA426)).